Reading from the N-terminus, the 82-residue chain is Cytochrome b559 subunit alpha (82 aa).

Residues 22–36 (IIHAVTLPAIFIAGF) traverse the membrane as a helical segment. H24 provides a ligand contact to heme.

The protein belongs to the PsbE/PsbF family. Heterodimer of an alpha subunit and a beta subunit. PSII is composed of 1 copy each of membrane proteins PsbA, PsbB, PsbC, PsbD, PsbE, PsbF, PsbH, PsbI, PsbJ, PsbK, PsbL, PsbM, PsbT, PsbX, PsbY, Psb30/Ycf12, peripheral proteins PsbO, CyanoQ (PsbQ), PsbU, PsbV and a large number of cofactors. It forms dimeric complexes. It depends on heme b as a cofactor.

It localises to the cellular thylakoid membrane. Functionally, this b-type cytochrome is tightly associated with the reaction center of photosystem II (PSII). PSII is a light-driven water:plastoquinone oxidoreductase that uses light energy to abstract electrons from H(2)O, generating O(2) and a proton gradient subsequently used for ATP formation. It consists of a core antenna complex that captures photons, and an electron transfer chain that converts photonic excitation into a charge separation. The chain is Cytochrome b559 subunit alpha from Prochlorococcus marinus (strain MIT 9515).